The following is a 136-amino-acid chain: Ubiquinol-cytochrome-c reductase complex assembly factor 2 (136 aa).

The N-terminal 13 residues, 1–13 (MAALRYRRFLKLC), are a transit peptide targeting the mitochondrion.

As to quaternary structure, interacts with UQCC1.

The protein localises to the mitochondrion matrix. It is found in the mitochondrion nucleoid. Its subcellular location is the mitochondrion. It localises to the mitochondrion intermembrane space. The protein resides in the mitochondrion inner membrane. In terms of biological role, required for the assembly of the ubiquinol-cytochrome c reductase complex (mitochondrial respiratory chain complex III or cytochrome b-c1 complex). Plays a role in the modulation of respiratory chain activities such as oxygen consumption and ATP production and via its modulation of the respiratory chain activity can regulate skeletal muscle differentiation and insulin secretion by pancreatic beta-cells. Involved in cytochrome b translation and/or stability. The chain is Ubiquinol-cytochrome-c reductase complex assembly factor 2 (Uqcc2) from Rattus norvegicus (Rat).